A 365-amino-acid polypeptide reads, in one-letter code: Solute carrier family 35 member G1 (365 aa).

Residues 1–33 (MRPQDSTGVAELQEPGLPLTDDAPPGATEEPAA) form a disordered region. The span at 23–33 (APPGATEEPAA) shows a compositional bias: low complexity. 10 helical membrane-spanning segments follow: residues 69–89 (GLGL…SLFV), 97–117 (AVEI…PCLI), 131–151 (IFLI…YYAY), 156–176 (LADA…FAWI), 187–207 (ALFT…PFLF), 222–242 (LKGT…LVIL), 252–272 (FLSI…ILSV), 286–306 (LFLI…TKAL), 311–333 (AGPV…IIFF), and 338–357 (TWWT…GAAI). EamA domains follow at residues 80–202 (FLFS…LIVR) and 233–357 (VFAA…GAAI).

The protein belongs to the TMEM20 family. Interacts with STIM1; stimulated by depletion of intracellular calcium. Interacts with ORAI1. Interacts with the plasma membrane calcium-transporting ATPases ATP2B1 and ATP2B4. Interacts with ATP1A1, ATP2A2, KPNB1 and XPO1. As to expression, ubiquitously expressed.

The protein localises to the cell membrane. It localises to the endoplasmic reticulum membrane. Its function is as follows. May play a role in intracellular calcium sensing and homeostasis. May act as a negative regulator of plasma membrane calcium-transporting ATPases preventing calcium efflux from the cell. This Homo sapiens (Human) protein is Solute carrier family 35 member G1 (SLC35G1).